Here is a 322-residue protein sequence, read N- to C-terminus: 4-hydroxythreonine-4-phosphate dehydrogenase (322 aa).

Threonine 132 contributes to the substrate binding site. Residues histidine 160, histidine 205, and histidine 260 each contribute to the a divalent metal cation site. Residues lysine 268, asparagine 277, and arginine 286 each contribute to the substrate site.

The protein belongs to the PdxA family. As to quaternary structure, homodimer. The cofactor is Zn(2+). It depends on Mg(2+) as a cofactor. Co(2+) serves as cofactor.

It is found in the cytoplasm. It carries out the reaction 4-(phosphooxy)-L-threonine + NAD(+) = 3-amino-2-oxopropyl phosphate + CO2 + NADH. The protein operates within cofactor biosynthesis; pyridoxine 5'-phosphate biosynthesis; pyridoxine 5'-phosphate from D-erythrose 4-phosphate: step 4/5. In terms of biological role, catalyzes the NAD(P)-dependent oxidation of 4-(phosphooxy)-L-threonine (HTP) into 2-amino-3-oxo-4-(phosphooxy)butyric acid which spontaneously decarboxylates to form 3-amino-2-oxopropyl phosphate (AHAP). The chain is 4-hydroxythreonine-4-phosphate dehydrogenase from Xanthomonas campestris pv. campestris (strain B100).